Consider the following 510-residue polypeptide: Inositol-3-phosphate synthase (510 aa).

Residues glycine 70, glycine 71, asparagine 72, asparagine 73, aspartate 143, isoleucine 180, glutamine 190, arginine 193, threonine 230, alanine 231, asparagine 232, threonine 233, glycine 281, serine 282, aspartate 306, serine 309, asparagine 340, asparagine 341, aspartate 342, lysine 355, glycine 393, aspartate 394, aspartate 422, and serine 423 each contribute to the NAD(+) site.

Belongs to the myo-inositol 1-phosphate synthase family. It depends on NAD(+) as a cofactor.

It is found in the cytoplasm. The protein localises to the cytosol. It localises to the nucleus. The catalysed reaction is D-glucose 6-phosphate = 1D-myo-inositol 3-phosphate. It functions in the pathway polyol metabolism; myo-inositol biosynthesis; myo-inositol from D-glucose 6-phosphate: step 1/2. Its function is as follows. Key enzyme in myo-inositol biosynthesis pathway that catalyzes the conversion of glucose 6-phosphate to 1-myo-inositol 1-phosphate in a NAD-dependent manner. In Hordeum vulgare (Barley), this protein is Inositol-3-phosphate synthase.